Consider the following 716-residue polypeptide: Polyribonucleotide nucleotidyltransferase (716 aa).

Aspartate 485 and aspartate 491 together coordinate Mg(2+). One can recognise a KH domain in the interval 552 to 611; the sequence is PRFTTIKIDQDKIKDVIGKGGAVIRELTESTNTNIEIGDDGTIKVAASDQADADAAIEKI. The region spanning 621–689 is the S1 motif domain; sequence GKIYQGKVAR…RQGRVRLSMK (69 aa). Residues 689-698 show a composition bias toward basic and acidic residues; it reads KEAAEKKEEP. Positions 689–716 are disordered; the sequence is KEAAEKKEEPAPEAPAEPAAEEENKSEE. A compositionally biased stretch (acidic residues) spans 707-716; that stretch reads AAEEENKSEE.

The protein belongs to the polyribonucleotide nucleotidyltransferase family. Component of the RNA degradosome, which is a multiprotein complex involved in RNA processing and mRNA degradation. Requires Mg(2+) as cofactor.

It localises to the cytoplasm. The catalysed reaction is RNA(n+1) + phosphate = RNA(n) + a ribonucleoside 5'-diphosphate. Involved in mRNA degradation. Catalyzes the phosphorolysis of single-stranded polyribonucleotides processively in the 3'- to 5'-direction. The protein is Polyribonucleotide nucleotidyltransferase of Idiomarina loihiensis (strain ATCC BAA-735 / DSM 15497 / L2-TR).